The sequence spans 457 residues: Senescence-associated protein OSA15, chloroplastic (457 aa).

The transit peptide at 1–57 directs the protein to the chloroplast; it reads MATRIPGTVAASGVYYNDQYRMPCKLKGIHCMALNCIPQKAKVRKCMNGYQSTFRFC.

The protein belongs to the ATA15/OSA15 family. Expressed in leaves (at protein level).

The protein localises to the plastid. The protein resides in the chloroplast. Functionally, may be involved in the regulation of leaf senescence. The sequence is that of Senescence-associated protein OSA15, chloroplastic from Oryza sativa subsp. japonica (Rice).